The following is a 1198-amino-acid chain: DNA polymerase (1198 aa).

3 disordered regions span residues 1–90 (MALV…TVVA), 179–198 (LEQP…QPNP), and 906–931 (ALAD…PSGT). Residues 30–40 (QQPPRAAPAPA) show a composition bias toward low complexity.

The protein belongs to the DNA polymerase type-B family. Heterodimer with the terminal protein; this heterodimer binds to bp 9 to 18 of the genome. Forms a complex with viral pTP, DBP and hosts NFIA and POU2F1/OCT1 for initiation of replication.

It is found in the host nucleus. The catalysed reaction is DNA(n) + a 2'-deoxyribonucleoside 5'-triphosphate = DNA(n+1) + diphosphate. Eukaryotic-type DNA polymerase involved in viral genomic replication. DNA synthesis is protein primed, and acts in a strand displacement replication. Assembles in complex with viral pTP, DBP, host NFIA and host POU2F1/OCT1 on viral origin of replication. The polymerase covalently transfers dCMP onto pTP, thereby initiating complementary strand synthesis. This Homo sapiens (Human) protein is DNA polymerase.